The chain runs to 115 residues: Large ribosomal subunit protein uL22 (115 aa).

Belongs to the universal ribosomal protein uL22 family. Part of the 50S ribosomal subunit.

Its function is as follows. This protein binds specifically to 23S rRNA; its binding is stimulated by other ribosomal proteins, e.g. L4, L17, and L20. It is important during the early stages of 50S assembly. It makes multiple contacts with different domains of the 23S rRNA in the assembled 50S subunit and ribosome. The globular domain of the protein is located near the polypeptide exit tunnel on the outside of the subunit, while an extended beta-hairpin is found that lines the wall of the exit tunnel in the center of the 70S ribosome. The sequence is that of Large ribosomal subunit protein uL22 from Lactiplantibacillus plantarum (strain ATCC BAA-793 / NCIMB 8826 / WCFS1) (Lactobacillus plantarum).